The chain runs to 318 residues: HPr kinase/phosphorylase (318 aa).

Catalysis depends on residues His-141 and Lys-162. 156-163 (GDSAMGKS) lines the ATP pocket. Residue Ser-163 participates in Mg(2+) binding. Asp-180 acts as the Proton acceptor; for phosphorylation activity. Proton donor; for dephosphorylation activity in catalysis. The important for the catalytic mechanism of both phosphorylation and dephosphorylation stretch occupies residues 204 to 213 (LEVRGLGILN). Mg(2+) is bound at residue Glu-205. The active site involves Arg-248. Residues 269–274 (PVAAGR) are important for the catalytic mechanism of dephosphorylation.

Belongs to the HPrK/P family. Homohexamer. The cofactor is Mg(2+).

It carries out the reaction [HPr protein]-L-serine + ATP = [HPr protein]-O-phospho-L-serine + ADP + H(+). The catalysed reaction is [HPr protein]-O-phospho-L-serine + phosphate + H(+) = [HPr protein]-L-serine + diphosphate. Catalyzes the ATP- as well as the pyrophosphate-dependent phosphorylation of a specific serine residue in HPr, a phosphocarrier protein of the phosphoenolpyruvate-dependent sugar phosphotransferase system (PTS). HprK/P also catalyzes the pyrophosphate-producing, inorganic phosphate-dependent dephosphorylation (phosphorolysis) of seryl-phosphorylated HPr (P-Ser-HPr). This Chromobacterium violaceum (strain ATCC 12472 / DSM 30191 / JCM 1249 / CCUG 213 / NBRC 12614 / NCIMB 9131 / NCTC 9757 / MK) protein is HPr kinase/phosphorylase.